Reading from the N-terminus, the 203-residue chain is Small ribosomal subunit protein uS4c (203 aa).

Residues 15-42 (LGALPGLTSKRPRAGSDPRNQELSGNKS) form a disordered region. The S4 RNA-binding domain maps to 89 to 150 (MRLDNILFRL…DQKSKAMIQN (62 aa)).

It belongs to the universal ribosomal protein uS4 family. In terms of assembly, part of the 30S ribosomal subunit. Contacts protein S5. The interaction surface between S4 and S5 is involved in control of translational fidelity.

Its subcellular location is the plastid. The protein resides in the chloroplast. In terms of biological role, one of the primary rRNA binding proteins, it binds directly to 16S rRNA where it nucleates assembly of the body of the 30S subunit. With S5 and S12 plays an important role in translational accuracy. In Oenothera elata subsp. hookeri (Hooker's evening primrose), this protein is Small ribosomal subunit protein uS4c (rps4).